We begin with the raw amino-acid sequence, 735 residues long: Lebercilin-like protein (735 aa).

Disordered stretches follow at residues 12–54 and 91–115; these read TEAH…NGSV and EKPLAKAKEKRKYNAGKLPQPRGQK. The span at 43-53 shows a compositional bias: low complexity; it reads QSQNSQASNGS. Positions 205-335 form a coiled coil; that stretch reads TAKHQNEVKN…QQKLKEKDRE (131 aa). 4 disordered regions span residues 356 to 379, 473 to 597, 632 to 657, and 685 to 735; these read YPKVSSTKSVQADRKSLPSVNMRH, SKEV…PRKH, KHRSEQELRLEPAGYEPSFGKGAGAR, and GRAG…KTVV. Residues 487–525 are compositionally biased toward basic and acidic residues; the sequence is TPRRPKENKEDQEKRAIPAEAEPTAKESEAHKDAEDKAL. Residues 528-541 show a composition bias toward low complexity; it reads AAGNAGDAGDAGDA. 3 stretches are compositionally biased toward basic and acidic residues: residues 542-553, 573-588, and 632-641; these read GNDREVVGEHKV, EVHGAGEAPRDVEPGR, and KHRSEQELRL. The segment covering 689-707 has biased composition (polar residues); sequence SSDSEAVSKSPQTGPQASA.

It belongs to the LCA5 family.

The polypeptide is Lebercilin-like protein (Mus musculus (Mouse)).